We begin with the raw amino-acid sequence, 213 residues long: Ribonuclease HII (213 aa).

Residues 1-213 (MKIIGIDEAG…SWKTAQKFIQ (213 aa)) enclose the RNase H type-2 domain. Aspartate 7, glutamate 8, and aspartate 105 together coordinate a divalent metal cation.

It belongs to the RNase HII family. Mn(2+) serves as cofactor. Mg(2+) is required as a cofactor.

Its subcellular location is the cytoplasm. It catalyses the reaction Endonucleolytic cleavage to 5'-phosphomonoester.. Its function is as follows. Endonuclease that specifically degrades the RNA of RNA-DNA hybrids. The polypeptide is Ribonuclease HII (Methanococcoides burtonii (strain DSM 6242 / NBRC 107633 / OCM 468 / ACE-M)).